We begin with the raw amino-acid sequence, 656 residues long: Protein teflon (656 aa).

A C2H2-type 1 zinc finger spans residues 33–56 (LYCHFCRDLFTQLPEFLRHLQSNH). The interval 80–131 (DKAHEDAQSAGHNSSSGDSRSLMNSEDSRAIDGSEENSDNSPVKPEQIGKQN) is disordered. The segment covering 89 to 104 (AGHNSSSGDSRSLMNS) has biased composition (polar residues). 2 consecutive C2H2-type zinc fingers follow at residues 606-628 (YFCK…LISH) and 632-655 (FQCT…RNAH).

This sequence belongs to the Teflon family.

It is found in the nucleus. It localises to the chromosome. Its function is as follows. Specifically required in males for proper segregation of autosomal bivalents at meiosis I. Expression is required in the male germ line prior to spermatocyte stage S4. May have a role as a bridging molecule maintaining adhesion to hold autosome bivalents together via heterochromatic connections. This Drosophila sechellia (Fruit fly) protein is Protein teflon.